The following is a 222-amino-acid chain: Large ribosomal subunit protein uL11c (222 aa).

Residues 1 to 20 (MASSSLSTLCSSTSSSLHPN) form a disordered region. Residues 1-62 (MASSSLSTLC…TPRFLTVIAM (62 aa)) constitute a chloroplast transit peptide.

The protein belongs to the universal ribosomal protein uL11 family. In terms of assembly, part of the ribosomal stalk of the 50S ribosomal subunit. Interacts with L10 and the large rRNA to form the base of the stalk. L10 forms an elongated spine to which L12 dimers bind in a sequential fashion forming a multimeric L10(L12)X complex.

It is found in the plastid. Its subcellular location is the chloroplast. In terms of biological role, forms part of the ribosomal stalk which helps the ribosome interact with GTP-bound translation factors. In Arabidopsis thaliana (Mouse-ear cress), this protein is Large ribosomal subunit protein uL11c (RPL11).